Here is a 439-residue protein sequence, read N- to C-terminus: Xaa-Pro dipeptidase (439 aa).

5 residues coordinate Mn(2+): Asp-244, Asp-255, His-335, Glu-380, and Glu-419.

Belongs to the peptidase M24B family. Bacterial-type prolidase subfamily. Mn(2+) is required as a cofactor.

It catalyses the reaction Xaa-L-Pro dipeptide + H2O = an L-alpha-amino acid + L-proline. In terms of biological role, splits dipeptides with a prolyl residue in the C-terminal position. The sequence is that of Xaa-Pro dipeptidase from Shewanella amazonensis (strain ATCC BAA-1098 / SB2B).